The following is a 495-amino-acid chain: Neuronal acetylcholine receptor subunit alpha-3 (495 aa).

A signal peptide spans 1–21; that stretch reads MARRSRLRRLLLLLLLPVAST. Topologically, residues 22 to 240 are extracellular; that stretch reads SDAEHRLFER…PLFYTINLII (219 aa). N-linked (GlcNAc...) asparagine glycosylation is found at asparagine 45 and asparagine 162. Disulfide bonds link cysteine 149–cysteine 163 and cysteine 213–cysteine 214. A helical membrane pass occupies residues 241 to 256; the sequence is PCLLISFLTVLVFYLP. At 257–258 the chain is on the cytoplasmic side; sequence SD. A helical membrane pass occupies residues 259–275; that stretch reads CGEKVTLCISVLLSLTV. Glutamate 261 is a binding site for Na(+). At 276–297 the chain is on the extracellular side; that stretch reads FLLVITETIPSTSLVIPLIGEY. The chain crosses the membrane as a helical span at residues 298–316; that stretch reads LLFTMIFVTLSIVITVFVL. Over 317 to 464 the chain is Cytoplasmic; that stretch reads NVHYRTPTTH…QDDWKYVAMV (148 aa). 2 positions are modified to phosphoserine: serine 403 and serine 406. The helical transmembrane segment at 465–483 threads the bilayer; the sequence is IDRIFLWVFILVCILGTAG. The Extracellular portion of the chain corresponds to 484 to 495; sequence LFLQPLMTRDDA.

This sequence belongs to the ligand-gated ion channel (TC 1.A.9) family. Acetylcholine receptor (TC 1.A.9.1) subfamily. Alpha-3/CHRNA3 sub-subfamily. As to quaternary structure, neuronal AChR is composed of two different types of subunits: alpha and beta. CHRNA3/Alpha-3 subunit can be combined to CHRNB2/beta-2 or CHRNB4/beta-4 to give rise to functional receptors. Part of a complex composed of STUB1/CHIP, VCP/p97, CHRNA3, and UBXN2A that modulates the ubiquitination and endoplasmic reticulum-associated degradation (ERAD) of CHRNA3. Within the complex UBXN2A acts as a scaffold protein required for the interaction of CHRNA3 with VCP/p97, this interaction also inhibits CHRNA3 ubiquitination by STUB1/CHIP and subsequently ERAD. Interacts with UBXN2A (via SEP domain), the interaction is required for the interaction of CHRNA3 in the STUB1:VCP:UBXN2A complex. Interacts with RIC3; which is required for proper folding and assembly. Interacts with LYPD6. In terms of processing, ubiquitinated; by STUB1/CHIP and thereafter degraded by the 26S proteosome complex.

The protein resides in the synaptic cell membrane. It is found in the cell membrane. It localises to the endoplasmic reticulum. The protein localises to the golgi apparatus. It catalyses the reaction K(+)(in) = K(+)(out). It carries out the reaction Na(+)(in) = Na(+)(out). The enzyme catalyses Ca(2+)(in) = Ca(2+)(out). With respect to regulation, activated by a myriad of ligands such as acetylcholine, cytisine, nicotine, choline and epibatidine. The heteropentamer CHRNA3:CHRNB2 activity is blocked by alpha-conotoxins ImI, ImII, PnIA, GID and MII. The heteropentamer CHRNA3:CHRNB4 activity is blocked by the alpha-conotoxin ImI and AuIB. Functionally, component of neuronal acetylcholine receptors (nAChRs) that function as pentameric, ligand-gated cation channels with high calcium permeability among other activities. nAChRs are excitatory neurotrasnmitter receptors formed by a collection of nAChR subunits known to mediate synaptic transmission in the nervous system and the neuromuscular junction. Each nAchR subunit confers differential attributes to channel properties, including activation, deactivation and desensitization kinetics, pH sensitivity, cation permeability, and binding to allosteric modulators. CHRNA3 forms heteropentameric neuronal acetylcholine receptors with CHRNB2 and CHRNB4. CHRNA3:CHRNB4 being predominant in neurons of the autonomic ganglia, it is known as ganglionic nicotinic receptor. CHRNA3:CHRNB4 also plays an important role in the habenulo-interpeduncular tract, modulating the mesolimbic dopamine system and affecting reward circuits and addiction. Hypothalamic CHRNA3:CHRNB4 nAChR activation by nicotine leads to activation of POMC neurons and a decrease in food intake. Also expressed in the urothelium where it modulates reflex bladder activity by increasing intracellular calcium through extracellular influx and basal ATP release. This Bos taurus (Bovine) protein is Neuronal acetylcholine receptor subunit alpha-3 (CHRNA3).